Consider the following 532-residue polypeptide: Light-independent protochlorophyllide reductase subunit B (532 aa).

Asp-36 provides a ligand contact to [4Fe-4S] cluster. Asp-292 acts as the Proton donor in catalysis. 428-429 (GL) contacts substrate. Positions 445–486 (EEEEPESISNGHAAAAGSEGGVPDSGEAGDAGDTDGMPWSPD) are disordered.

This sequence belongs to the ChlB/BchB/BchZ family. As to quaternary structure, protochlorophyllide reductase is composed of three subunits; BchL, BchN and BchB. Forms a heterotetramer of two BchB and two BchN subunits. [4Fe-4S] cluster is required as a cofactor.

The enzyme catalyses chlorophyllide a + oxidized 2[4Fe-4S]-[ferredoxin] + 2 ADP + 2 phosphate = protochlorophyllide a + reduced 2[4Fe-4S]-[ferredoxin] + 2 ATP + 2 H2O. It participates in porphyrin-containing compound metabolism; bacteriochlorophyll biosynthesis (light-independent). Component of the dark-operative protochlorophyllide reductase (DPOR) that uses Mg-ATP and reduced ferredoxin to reduce ring D of protochlorophyllide (Pchlide) to form chlorophyllide a (Chlide). This reaction is light-independent. The NB-protein (BchN-BchB) is the catalytic component of the complex. This Chlorobium phaeobacteroides (strain BS1) protein is Light-independent protochlorophyllide reductase subunit B.